We begin with the raw amino-acid sequence, 253 residues long: 5'/3'-nucleotidase SurE (253 aa).

A divalent metal cation is bound by residues aspartate 8, aspartate 9, serine 39, and asparagine 92.

Belongs to the SurE nucleotidase family. The cofactor is a divalent metal cation.

The protein localises to the cytoplasm. The enzyme catalyses a ribonucleoside 5'-phosphate + H2O = a ribonucleoside + phosphate. The catalysed reaction is a ribonucleoside 3'-phosphate + H2O = a ribonucleoside + phosphate. It carries out the reaction [phosphate](n) + H2O = [phosphate](n-1) + phosphate + H(+). Functionally, nucleotidase with a broad substrate specificity as it can dephosphorylate various ribo- and deoxyribonucleoside 5'-monophosphates and ribonucleoside 3'-monophosphates with highest affinity to 3'-AMP. Also hydrolyzes polyphosphate (exopolyphosphatase activity) with the preference for short-chain-length substrates (P20-25). Might be involved in the regulation of dNTP and NTP pools, and in the turnover of 3'-mononucleotides produced by numerous intracellular RNases (T1, T2, and F) during the degradation of various RNAs. The protein is 5'/3'-nucleotidase SurE of Salmonella typhimurium (strain LT2 / SGSC1412 / ATCC 700720).